The primary structure comprises 217 residues: GRB2-related adapter protein (217 aa).

In terms of domain architecture, SH3 1 spans 1-58 (MESVALYSFQATESDELAFNKGDTLKILNMEDDQNWYKAELRGAEGFVPKNYIRVKPH). Positions 60–152 (WYSGRISRQL…RRQIFLCDEQ (93 aa)) constitute an SH2 domain. The region spanning 158 to 217 (SRACFAQAQFDFSAQDPSQLSLRRGDIVEVVEREDPHWWRGRAGGRLGFFPRSYVQPVHL) is the SH3 2 domain.

The protein belongs to the GRB2/sem-5/DRK family. Associates through its SH2 domain with ligand-activated receptors for stem cell factor (KIT) and erythropoietin (EPOR). Also forms a stable complex with the Bcr-Abl oncoprotein. GRAP is associated with the Ras guanine nucleotide exchange factor SOS1, primarily through its N-terminal SH3 domain. Interacts with phosphorylated LAT upon TCR activation. Interacts with SHB. As to expression, expressed in inner ear, in neruonal fibers innervating cochlear and utricular auditory hair cells (at protein level).

The protein resides in the membrane. It is found in the synapse. Its function is as follows. Couples signals from receptor and cytoplasmic tyrosine kinases to the Ras signaling pathway. Plays a role in the inner ear and in hearing. The protein is GRB2-related adapter protein of Mus musculus (Mouse).